The following is a 37-amino-acid chain: Cytochrome b6-f complex subunit 5 (37 aa).

The chain crosses the membrane as a helical span at residues phenylalanine 5 to alanine 25.

This sequence belongs to the PetG family. The 4 large subunits of the cytochrome b6-f complex are cytochrome b6, subunit IV (17 kDa polypeptide, PetD), cytochrome f and the Rieske protein, while the 4 small subunits are PetG, PetL, PetM and PetN. The complex functions as a dimer.

The protein localises to the plastid. Its subcellular location is the chloroplast thylakoid membrane. Component of the cytochrome b6-f complex, which mediates electron transfer between photosystem II (PSII) and photosystem I (PSI), cyclic electron flow around PSI, and state transitions. PetG is required for either the stability or assembly of the cytochrome b6-f complex. The polypeptide is Cytochrome b6-f complex subunit 5 (Platanus occidentalis (Sycamore)).